Here is a 156-residue protein sequence, read N- to C-terminus: Type IV major fimbrial protein FimA (156 aa).

The propeptide at 1–7 is leader sequence; that stretch reads MKSLQKG. Phenylalanine 8 carries the post-translational modification N-methylphenylalanine. A helical membrane pass occupies residues 8–28; it reads FTLIELMIVVAIIGILAAIAI. Disulfide bonds link cysteine 57-cysteine 67 and cysteine 141-cysteine 154.

It belongs to the N-Me-Phe pilin family. As to quaternary structure, the pili are polar flexible filaments of about 5.4 nanometers diameter and 2.5 micrometers average length; they consist of only a single polypeptide chain arranged in a helical configuration of five subunits per turn in the assembled pilus.

Its subcellular location is the fimbrium. The protein localises to the membrane. In terms of biological role, major component of the type IV fimbriae that plays an essential role in twitching motility, natural transformation, and protease secretion. The chain is Type IV major fimbrial protein FimA (fimA) from Dichelobacter nodosus (Bacteroides nodosus).